Reading from the N-terminus, the 1420-residue chain is Putative mediator of RNA polymerase II transcription subunit 14 (1420 aa).

A coiled-coil region spans residues 1–43; the sequence is MDQNQQQQQQQQQQQQQQQQQQQQQQQQQQQQQQQQQQQQQQQ. 2 stretches are compositionally biased toward low complexity: residues 1–43 and 449–474; these read MDQN…QQQQ and TTSSSSSSSSNNNNTASPIINRNNNN. Disordered regions lie at residues 1 to 59, 449 to 490, 750 to 799, and 1389 to 1420; these read MDQN…TTPI, TTSS…NPLS, QQDI…GYKN, and QQQQQQQQQQQQQQQQQQIENNNFASASSSIR. Polar residues predominate over residues 475–490; sequence GKPNLLSTKQSNNPLS. Low complexity-rich tracts occupy residues 755-795 and 1389-1406; these read NNNN…NGNN and QQQQQQQQQQQQQQQQQQ. Residues 1382 to 1412 adopt a coiled-coil conformation; that stretch reads LLIQQQQQQQQQQQQQQQQQQQQQQIENNNF. The span at 1407 to 1420 shows a compositional bias: polar residues; that stretch reads IENNNFASASSSIR.

Belongs to the Mediator complex subunit 14 family. In terms of assembly, component of the Mediator complex.

It is found in the nucleus. Functionally, component of the Mediator complex, a coactivator involved in the regulated transcription of nearly all RNA polymerase II-dependent genes. Mediator functions as a bridge to convey information from gene-specific regulatory proteins to the basal RNA polymerase II transcription machinery. Mediator is recruited to promoters by direct interactions with regulatory proteins and serves as a scaffold for the assembly of a functional preinitiation complex with RNA polymerase II and the general transcription factors. The protein is Putative mediator of RNA polymerase II transcription subunit 14 (med14) of Dictyostelium discoideum (Social amoeba).